Here is a 204-residue protein sequence, read N- to C-terminus: Casparian strip membrane protein 2 (204 aa).

The Cytoplasmic segment spans residues 1–41 (MKNESTFIDVPADSSSAMKGKAPLIGVAKDHTASGSGGYNR). The helical transmembrane segment at 42 to 62 (GLSIFDFLLRLAAIVAASVAA) threads the bilayer. At 63 to 92 (GTMFTSDETLPFFTQFLQFEAGYDDLPTFQ) the chain is on the extracellular side. The helical transmembrane segment at 93–113 (FFVIAMSLVSGYIVLSLPISV) threads the bilayer. The Cytoplasmic portion of the chain corresponds to 114–125 (VTIVRPLAAAPR). A helical membrane pass occupies residues 126-146 (LLLLVLDTAVMGLTMAAASSA). Residues 147–178 (AAISYVAHNGNQNTNWLPICQQFFDFCQKTSG) are Extracellular-facing. Residues 179–199 (AVVSSFVAVVFFMILVVLSGV) traverse the membrane as a helical segment. At 200–204 (ALERH) the chain is on the cytoplasmic side.

Belongs to the Casparian strip membrane proteins (CASP) family. Homodimer and heterodimers.

Its subcellular location is the cell membrane. In terms of biological role, regulates membrane-cell wall junctions and localized cell wall deposition. Required for establishment of the Casparian strip membrane domain (CSD) and the subsequent formation of Casparian strips, a cell wall modification of the root endodermis that determines an apoplastic barrier between the intraorganismal apoplasm and the extraorganismal apoplasm and prevents lateral diffusion. This Raphanus sativus (Radish) protein is Casparian strip membrane protein 2.